The chain runs to 539 residues: GMP synthase [glutamine-hydrolyzing] (539 aa).

One can recognise a Glutamine amidotransferase type-1 domain in the interval 4–202; that stretch reads KILILDFGSQ…VLQIAGAKPD (199 aa). Catalysis depends on cysteine 81, which acts as the Nucleophile. Active-site residues include histidine 176 and glutamate 178. A GMPS ATP-PPase domain is found at 203-395; the sequence is WIMKNHIEEA…LGLPPEMVYR (193 aa). Residue 230 to 236 participates in ATP binding; the sequence is SGGVDSS.

In terms of assembly, homodimer.

The catalysed reaction is XMP + L-glutamine + ATP + H2O = GMP + L-glutamate + AMP + diphosphate + 2 H(+). It functions in the pathway purine metabolism; GMP biosynthesis; GMP from XMP (L-Gln route): step 1/1. Functionally, catalyzes the synthesis of GMP from XMP. In Burkholderia orbicola (strain AU 1054), this protein is GMP synthase [glutamine-hydrolyzing].